A 153-amino-acid chain; its full sequence is Arginine repressor (153 aa).

The protein belongs to the ArgR family.

It is found in the cytoplasm. It participates in amino-acid biosynthesis; L-arginine biosynthesis [regulation]. Regulates arginine biosynthesis genes. This Actinobacillus pleuropneumoniae serotype 3 (strain JL03) protein is Arginine repressor.